The chain runs to 417 residues: Serine hydroxymethyltransferase 2 (417 aa).

(6S)-5,6,7,8-tetrahydrofolate is bound by residues Leu-121 and 125–127; that span reads GHL. N6-(pyridoxal phosphate)lysine is present on Lys-229. A (6S)-5,6,7,8-tetrahydrofolate-binding site is contributed by 354 to 356; the sequence is SPF.

Belongs to the SHMT family. In terms of assembly, homodimer. The cofactor is pyridoxal 5'-phosphate.

It localises to the cytoplasm. It carries out the reaction (6R)-5,10-methylene-5,6,7,8-tetrahydrofolate + glycine + H2O = (6S)-5,6,7,8-tetrahydrofolate + L-serine. Its pathway is one-carbon metabolism; tetrahydrofolate interconversion. It functions in the pathway amino-acid biosynthesis; glycine biosynthesis; glycine from L-serine: step 1/1. Its function is as follows. Catalyzes the reversible interconversion of serine and glycine with tetrahydrofolate (THF) serving as the one-carbon carrier. This reaction serves as the major source of one-carbon groups required for the biosynthesis of purines, thymidylate, methionine, and other important biomolecules. Also exhibits THF-independent aldolase activity toward beta-hydroxyamino acids, producing glycine and aldehydes, via a retro-aldol mechanism. The chain is Serine hydroxymethyltransferase 2 from Pseudomonas fluorescens (strain Pf0-1).